We begin with the raw amino-acid sequence, 239 residues long: Ribonuclease PH (239 aa).

Residues R86 and 124–126 contribute to the phosphate site; that span reads GTR.

It belongs to the RNase PH family. As to quaternary structure, homohexameric ring arranged as a trimer of dimers.

The enzyme catalyses tRNA(n+1) + phosphate = tRNA(n) + a ribonucleoside 5'-diphosphate. Its function is as follows. Phosphorolytic 3'-5' exoribonuclease that plays an important role in tRNA 3'-end maturation. Removes nucleotide residues following the 3'-CCA terminus of tRNAs; can also add nucleotides to the ends of RNA molecules by using nucleoside diphosphates as substrates, but this may not be physiologically important. Probably plays a role in initiation of 16S rRNA degradation (leading to ribosome degradation) during starvation. This Psychromonas ingrahamii (strain DSM 17664 / CCUG 51855 / 37) protein is Ribonuclease PH.